A 153-amino-acid chain; its full sequence is Deoxyuridine 5'-triphosphate nucleotidohydrolase (153 aa).

Substrate-binding positions include 71-73 (RSG), asparagine 84, 88-90 (TID), and lysine 98.

This sequence belongs to the dUTPase family. Requires Mg(2+) as cofactor.

The enzyme catalyses dUTP + H2O = dUMP + diphosphate + H(+). It functions in the pathway pyrimidine metabolism; dUMP biosynthesis; dUMP from dCTP (dUTP route): step 2/2. Functionally, this enzyme is involved in nucleotide metabolism: it produces dUMP, the immediate precursor of thymidine nucleotides and it decreases the intracellular concentration of dUTP so that uracil cannot be incorporated into DNA. The polypeptide is Deoxyuridine 5'-triphosphate nucleotidohydrolase (Wolbachia pipientis subsp. Culex pipiens (strain wPip)).